Here is a 271-residue protein sequence, read N- to C-terminus: Mannosyl-3-phosphoglycerate phosphatase (271 aa).

Residue Asp13 is the Nucleophile of the active site. Asp13, Asp15, and Asp214 together coordinate Mg(2+).

The protein belongs to the HAD-like hydrolase superfamily. MPGP family. Mg(2+) is required as a cofactor.

The protein resides in the cytoplasm. It catalyses the reaction 2-O-(alpha-D-mannosyl)-3-phosphoglycerate + H2O = (2R)-2-O-(alpha-D-mannosyl)-glycerate + phosphate. This is Mannosyl-3-phosphoglycerate phosphatase (yedP) from Shigella dysenteriae serotype 1 (strain Sd197).